Reading from the N-terminus, the 230-residue chain is Large ribosomal subunit protein uL1 (230 aa).

This sequence belongs to the universal ribosomal protein uL1 family. As to quaternary structure, part of the 50S ribosomal subunit.

Functionally, binds directly to 23S rRNA. The L1 stalk is quite mobile in the ribosome, and is involved in E site tRNA release. Protein L1 is also a translational repressor protein, it controls the translation of the L11 operon by binding to its mRNA. The protein is Large ribosomal subunit protein uL1 of Bifidobacterium adolescentis (strain ATCC 15703 / DSM 20083 / NCTC 11814 / E194a).